A 187-amino-acid polypeptide reads, in one-letter code: Putative manganese efflux pump MntP (187 aa).

6 helical membrane passes run phenylalanine 3–cysteine 23, histidine 35–tyrosine 55, phenylalanine 56–leucine 76, leucine 107–leucine 127, valine 129–alanine 149, and leucine 166–phenylalanine 186.

This sequence belongs to the MntP (TC 9.B.29) family.

Its subcellular location is the cell inner membrane. Functionally, probably functions as a manganese efflux pump. This chain is Putative manganese efflux pump MntP, found in Campylobacter jejuni (strain RM1221).